Reading from the N-terminus, the 242-residue chain is Ribosomal RNA small subunit methyltransferase G (242 aa).

S-adenosyl-L-methionine is bound by residues glycine 79, phenylalanine 84, 130-131 (AE), and arginine 150.

The protein belongs to the methyltransferase superfamily. RNA methyltransferase RsmG family.

Its subcellular location is the cytoplasm. Its function is as follows. Specifically methylates the N7 position of a guanine in 16S rRNA. The protein is Ribosomal RNA small subunit methyltransferase G of Levilactobacillus brevis (strain ATCC 367 / BCRC 12310 / CIP 105137 / JCM 1170 / LMG 11437 / NCIMB 947 / NCTC 947) (Lactobacillus brevis).